Here is a 397-residue protein sequence, read N- to C-terminus: Yellow-related salivary protein LJM111 (397 aa).

The first 18 residues, methionine 1–glycine 18, serve as a signal peptide directing secretion.

It belongs to the major royal jelly protein family. Salivary gland (at protein level).

It localises to the secreted. Probably modulates blood feeding of sand flies on vertebrate species by binding and sequestering different mediators involved in the host response. Binds biogenic amines. Binds adrenaline and noradrenaline with high affinity. Binds serotonin. Binds dopamine and octopamine. Exhibits anti-inflammatory effects in the host: reduces IL17A, TNF-alpha (TNF) and IFN-gamma (IFNG) production by host lymph node cells, suppresses expression of MHC-II and CD86, reduces TNF-alpha production and increases IL10 production, in host bone marrow-derived dendritic cells (BMDCs) stimulated by lipopolysaccharides. Reduces pain in mouse mechanical hypernociception model. The protein is Yellow-related salivary protein LJM111 of Lutzomyia longipalpis (Sand fly).